Consider the following 647-residue polypeptide: UvrABC system protein C (647 aa).

In terms of domain architecture, GIY-YIG spans Ser26–Ile106. The 36-residue stretch at Asp216–Leu251 folds into the UVR domain.

It belongs to the UvrC family. In terms of assembly, interacts with UvrB in an incision complex.

It localises to the cytoplasm. Functionally, the UvrABC repair system catalyzes the recognition and processing of DNA lesions. UvrC both incises the 5' and 3' sides of the lesion. The N-terminal half is responsible for the 3' incision and the C-terminal half is responsible for the 5' incision. The protein is UvrABC system protein C of Prochlorococcus marinus (strain MIT 9211).